We begin with the raw amino-acid sequence, 159 residues long: Ribosomal RNA large subunit methyltransferase H (159 aa).

Residues L76, G107, and 126-131 (LSKLTM) each bind S-adenosyl-L-methionine.

The protein belongs to the RNA methyltransferase RlmH family. Homodimer.

It localises to the cytoplasm. It carries out the reaction pseudouridine(1915) in 23S rRNA + S-adenosyl-L-methionine = N(3)-methylpseudouridine(1915) in 23S rRNA + S-adenosyl-L-homocysteine + H(+). Its function is as follows. Specifically methylates the pseudouridine at position 1915 (m3Psi1915) in 23S rRNA. The protein is Ribosomal RNA large subunit methyltransferase H of Acinetobacter baumannii (strain SDF).